The chain runs to 369 residues: Glutamate 5-kinase (369 aa).

Lys8 provides a ligand contact to ATP. Substrate-binding residues include Ser49, Asp136, and Asn148. ATP-binding positions include 168–169 (TD) and 211–217 (TGGMATK). Positions 276–354 (KGELWLDEGA…TELANILGYA (79 aa)) constitute a PUA domain.

Belongs to the glutamate 5-kinase family.

The protein localises to the cytoplasm. The catalysed reaction is L-glutamate + ATP = L-glutamyl 5-phosphate + ADP. It participates in amino-acid biosynthesis; L-proline biosynthesis; L-glutamate 5-semialdehyde from L-glutamate: step 1/2. Functionally, catalyzes the transfer of a phosphate group to glutamate to form L-glutamate 5-phosphate. This is Glutamate 5-kinase from Thermosynechococcus vestitus (strain NIES-2133 / IAM M-273 / BP-1).